The following is a 154-amino-acid chain: Protein X (154 aa).

A mitochondrial targeting sequence region spans residues 68–117; that stretch reads PCALRFTSARRMETTVNAHQFLPKVLHKRTLGLSAMSTTDLEAYFKDCLF.

This sequence belongs to the orthohepadnavirus protein X family. As to quaternary structure, may form homodimer. May interact with host CEBPA, CFLAR, CREB1, DDB1, E4F1, HBXIP, HSPD1/HSP60, NFKBIA, POLR2E and SMAD4. Interacts with host SMC5-SMC6 complex and induces its degradation. Interacts with host TRPC4AP; leading to prevent ubiquitination of TRPC4AP. Interacts with host PLSCR1; this interaction promotes ubiquitination and degradation of HBx and impairs HBx-mediated cell proliferation. In terms of processing, a fraction may be phosphorylated in insect cells and HepG2 cells, a human hepatoblastoma cell line. Phosphorylated in vitro by host protein kinase C or mitogen-activated protein kinase. N-acetylated in insect cells.

It localises to the host cytoplasm. The protein localises to the host nucleus. Its subcellular location is the host mitochondrion. In terms of biological role, multifunctional protein that plays a role in silencing host antiviral defenses and promoting viral transcription. Does not seem to be essential for HBV infection. May be directly involved in development of cirrhosis and liver cancer (hepatocellular carcinoma). Most of cytosolic activities involve modulation of cytosolic calcium. The effect on apoptosis is controversial depending on the cell types in which the studies have been conducted. May induce apoptosis by localizing in mitochondria and causing loss of mitochondrial membrane potential. May also modulate apoptosis by binding host CFLAR, a key regulator of the death-inducing signaling complex (DISC). Promotes viral transcription by using the host E3 ubiquitin ligase DDB1 to target the SMC5-SMC6 complex to proteasomal degradation. This host complex would otherwise bind to viral episomal DNA, and prevents its transcription. Moderately stimulates transcription of many different viral and cellular transcription elements. Promoters and enhancers stimulated by HBx contain DNA binding sites for NF-kappa-B, AP-1, AP-2, c-EBP, ATF/CREB, or the calcium-activated factor NF-AT. The polypeptide is Protein X (Homo sapiens (Human)).